Here is a 244-residue protein sequence, read N- to C-terminus: Nuclear protein UL4 homolog (244 aa).

The segment at 193-227 (RPDDQTTPTPTPHQYTSQRRQPETNCPSSPQPAFF) is disordered. Over residues 205 to 220 (HQYTSQRRQPETNCPS) the composition is skewed to polar residues.

This sequence belongs to the alphaherpesvirinae HHV-1 UL4 family.

The protein localises to the host nucleus. This chain is Nuclear protein UL4 homolog, found in Varicella-zoster virus (strain Dumas) (HHV-3).